The primary structure comprises 143 residues: SsrA-binding protein (143 aa).

This sequence belongs to the SmpB family.

The protein resides in the cytoplasm. Functionally, required for rescue of stalled ribosomes mediated by trans-translation. Binds to transfer-messenger RNA (tmRNA), required for stable association of tmRNA with ribosomes. tmRNA and SmpB together mimic tRNA shape, replacing the anticodon stem-loop with SmpB. tmRNA is encoded by the ssrA gene; the 2 termini fold to resemble tRNA(Ala) and it encodes a 'tag peptide', a short internal open reading frame. During trans-translation Ala-aminoacylated tmRNA acts like a tRNA, entering the A-site of stalled ribosomes, displacing the stalled mRNA. The ribosome then switches to translate the ORF on the tmRNA; the nascent peptide is terminated with the 'tag peptide' encoded by the tmRNA and targeted for degradation. The ribosome is freed to recommence translation, which seems to be the essential function of trans-translation. The chain is SsrA-binding protein from Mycoplasmopsis synoviae (strain 53) (Mycoplasma synoviae).